Reading from the N-terminus, the 111-residue chain is Cytochrome c (111 aa).

The residue at position 1 (A1) is an N-acetylalanine. Heme c contacts are provided by C22, C25, and H26. Position 80 is an N6,N6,N6-trimethyllysine (K80). M88 lines the heme c pocket. Position 94 is an N6,N6,N6-trimethyllysine (K94).

Belongs to the cytochrome c family. In terms of processing, binds 1 heme c group covalently per subunit.

It localises to the mitochondrion intermembrane space. Electron carrier protein. The oxidized form of the cytochrome c heme group can accept an electron from the heme group of the cytochrome c1 subunit of cytochrome reductase. Cytochrome c then transfers this electron to the cytochrome oxidase complex, the final protein carrier in the mitochondrial electron-transport chain. The chain is Cytochrome c from Brassica napus (Rape).